Consider the following 275-residue polypeptide: PE family protein PE8 (275 aa).

Residues 5 to 93 form the PE domain; the sequence is KTVPEELTAA…AGTYGVTESL (89 aa).

The protein belongs to the mycobacterial PE family. In terms of assembly, forms a heterodimer with PPE15. The dimer forms a 1:1:1 heterotrimeric complex with EspG5.

The protein resides in the secreted. Its subcellular location is the cell wall. Promotes the intracellular survival of recombinant Mycobacterium within macrophages by regulating host inflammatory cytokines production and inhibiting cell late apoptosis. This chain is PE family protein PE8, found in Mycobacterium tuberculosis (strain ATCC 25618 / H37Rv).